The sequence spans 404 residues: Transcriptional repressor OPI1 (404 aa).

Ser10 carries the phosphoserine modification. The disordered stretch occupies residues 25 to 51 (QSCRQKSQPSEDVSQADKMPASESSTT). The span at 26-37 (SCRQKSQPSEDV) shows a compositional bias: polar residues. Positions 109–138 (KRQKLSRAIAKGKDNLKEYKLNMSIESKKR) are basic motif. Residues 139 to 160 (LVTCLHLLKLANKQLSDKISCL) are leucine-zipper. Disordered regions lie at residues 170–201 (HPLHKQDGNARTTTGAGEDETSSDEDDDDEEF), 305–327 (LQQQQQKRNKDGDDSASPSSSVT), and 378–404 (QQQQYRQQQQKDGNYVKPSQDNVDSKD). Residues 186–201 (GEDETSSDEDDDDEEF) show a composition bias toward acidic residues. The short motif at 200-206 (EFFDASE) is the FFAT element. The segment covering 378–387 (QQQQYRQQQQ) has biased composition (low complexity). The span at 394-404 (KPSQDNVDSKD) shows a compositional bias: polar residues.

Interacts with SCS2.

The protein resides in the endoplasmic reticulum. It is found in the nucleus. Functionally, negative regulator of the transcriptional complex INO2-INO4 in response to phospholipid precursor availability. When precursors become limiting, OPI1 is retained at the endoplasmic reticulum (ER) and INO2-INO4 activates INO1 and other genes required for phospholipid biosynthesis, whereas abundant precursor availability results in targeting of OPI1 to the nucleus to repress transcription of these genes. Binds directly to phosphatidic acid, which is required for ER targeting and may act as sensing mechanism for precursor availability, as phosphatidic acid becomes rapidly depleted upon phospholipid biosynthesis. The polypeptide is Transcriptional repressor OPI1 (OPI1) (Saccharomyces cerevisiae (strain ATCC 204508 / S288c) (Baker's yeast)).